Here is a 277-residue protein sequence, read N- to C-terminus: Myelin proteolipid protein (277 aa).

Residues 1 to 10 are Cytoplasmic-facing; that stretch reads MGLLECCARC. S-palmitoyl cysteine attachment occurs at residues cysteine 6, cysteine 7, and cysteine 10. Residues 11–36 form a helical membrane-spanning segment; that stretch reads LVGAPFASLVATGLCFFGVALFCGCG. Residues 37–59 lie on the Extracellular side of the membrane; the sequence is HEALTGTEKLIETYFSKNYQDYE. Residues 60–88 traverse the membrane as a helical segment; sequence YLINVIHAFQYVIYGTASFFFLYGALLLA. Topologically, residues 89-151 are cytoplasmic; the sequence is EGFYTTGAVR…LGKWLGHPDK (63 aa). A lipid anchor (S-palmitoyl cysteine) is attached at cysteine 109. Serine 114 carries the post-translational modification Phosphoserine. Residues threonine 116 and threonine 118 each carry the phosphothreonine modification. 2 S-palmitoyl cysteine lipidation sites follow: cysteine 139 and cysteine 141. Residues 152 to 178 traverse the membrane as a helical segment; it reads FVGITYALTIVWLLVFACSAVPVYIYF. At 179–238 the chain is on the extracellular side; sequence NTWTTCQSIAFPSKTSASIGSLCADARMYGVLPWNAFPGKVCGSNLLSICKTAEFQMTFH. 2 disulfide bridges follow: cysteine 184-cysteine 228 and cysteine 201-cysteine 220. Residue serine 199 is the site of O-palmitoyl serine attachment. Residues 239-268 form a helical membrane-spanning segment; it reads LFIAAFVGAAATLVSLLTFMIAATYNFAVL. Over 269–277 the chain is Cytoplasmic; the sequence is KLMGRGTKF.

Belongs to the myelin proteolipid protein family.

It localises to the cell membrane. Its subcellular location is the myelin membrane. This is the major myelin protein from the central nervous system. It plays an important role in the formation or maintenance of the multilamellar structure of myelin. This Canis lupus familiaris (Dog) protein is Myelin proteolipid protein (PLP1).